The chain runs to 128 residues: Ribonuclease P protein component (128 aa).

It belongs to the RnpA family. In terms of assembly, consists of a catalytic RNA component (M1 or rnpB) and a protein subunit.

The catalysed reaction is Endonucleolytic cleavage of RNA, removing 5'-extranucleotides from tRNA precursor.. Its function is as follows. RNaseP catalyzes the removal of the 5'-leader sequence from pre-tRNA to produce the mature 5'-terminus. It can also cleave other RNA substrates such as 4.5S RNA. The protein component plays an auxiliary but essential role in vivo by binding to the 5'-leader sequence and broadening the substrate specificity of the ribozyme. The polypeptide is Ribonuclease P protein component (Prochlorococcus marinus (strain AS9601)).